A 264-amino-acid polypeptide reads, in one-letter code: U1 snRNP-associated protein usp106 (264 aa).

Positions 83–126 (DYLEDLERHVDDCNKRIDIAEARREKTKEEEERIDELMRDIIHT) form a coiled coil. Positions 233–258 (EDREKSRDKKDGEKQRDNLASFEDKI) are enriched in basic and acidic residues. The interval 233–264 (EDREKSRDKKDGEKQRDNLASFEDKISTSFVA) is disordered.

The protein belongs to the Luc7 family. In terms of assembly, component of the U1 snRNP particle, a subcomplex of the spliceosome.

It is found in the cytoplasm. It localises to the nucleus. In terms of biological role, component of the U1 snRNP particle, which recognizes and binds the 5'-splice site of pre-mRNA. Together with other non-snRNP factors, U1 snRNP forms the spliceosomal commitment complex, that targets pre-mRNA to the splicing pathway. In Schizosaccharomyces pombe (strain 972 / ATCC 24843) (Fission yeast), this protein is U1 snRNP-associated protein usp106 (usp106).